Here is a 193-residue protein sequence, read N- to C-terminus: dTTP/UTP pyrophosphatase (193 aa).

The Proton acceptor role is filled by Asp77.

This sequence belongs to the Maf family. YhdE subfamily. A divalent metal cation serves as cofactor.

It is found in the cytoplasm. The enzyme catalyses dTTP + H2O = dTMP + diphosphate + H(+). It carries out the reaction UTP + H2O = UMP + diphosphate + H(+). In terms of biological role, nucleoside triphosphate pyrophosphatase that hydrolyzes dTTP and UTP. May have a dual role in cell division arrest and in preventing the incorporation of modified nucleotides into cellular nucleic acids. The protein is dTTP/UTP pyrophosphatase of Bacteroides fragilis (strain ATCC 25285 / DSM 2151 / CCUG 4856 / JCM 11019 / LMG 10263 / NCTC 9343 / Onslow / VPI 2553 / EN-2).